Reading from the N-terminus, the 244-residue chain is Phosphate propanoyltransferase (244 aa).

52 to 54 is a binding site for CoA; it reads ISA. Positions 56 and 58 each coordinate Zn(2+). Arg-106 serves as a coordination point for CoA. Residue Arg-112 coordinates phosphate. Residues Glu-118, His-166, His-168, and His-214 each coordinate Zn(2+). Asn-221 provides a ligand contact to CoA.

The protein belongs to the PduL family. In terms of assembly, full-length protein forms large oligomers. Possible homotrimer and monomer, when purified in the absence of the encapsulation peptide (EP, residues 1-20). The EP may influence oligomerization. Zn(2+) is required as a cofactor.

The protein localises to the bacterial microcompartment. The catalysed reaction is propanoyl-CoA + phosphate = propanoyl phosphate + CoA. Its function is as follows. Part of a bacterial microcompartment (BMC) locus required for growth on plant and algal sugars, including L-fucose and L-rhamnose. Thought to be active on lactyl-CoA in a lactaldehyde-degradation pathway. CoA is regenerated within the BMC via this enzyme, although there must also be cofactor transport across the BMC. Directly targeted to the BMC. This Planctopirus limnophila (strain ATCC 43296 / DSM 3776 / IFAM 1008 / Mu 290) (Planctomyces limnophilus) protein is Phosphate propanoyltransferase.